The sequence spans 309 residues: GTP cyclohydrolase MptA (309 aa).

This sequence belongs to the GTP cyclohydrolase IV family. In terms of assembly, homodimer. Fe(2+) serves as cofactor.

It carries out the reaction GTP + H2O = 7,8-dihydroneopterin 2',3'-cyclic phosphate + formate + diphosphate + H(+). It participates in cofactor biosynthesis; 5,6,7,8-tetrahydromethanopterin biosynthesis. Functionally, converts GTP to 7,8-dihydro-D-neopterin 2',3'-cyclic phosphate, the first intermediate in the biosynthesis of coenzyme methanopterin. This Haloarcula marismortui (strain ATCC 43049 / DSM 3752 / JCM 8966 / VKM B-1809) (Halobacterium marismortui) protein is GTP cyclohydrolase MptA.